Reading from the N-terminus, the 698-residue chain is Polyphosphate kinase 1 (698 aa).

Residue asparagine 46 coordinates ATP. Residues arginine 377 and arginine 407 each contribute to the Mg(2+) site. Histidine 437 (phosphohistidine intermediate) is an active-site residue. Tyrosine 470, arginine 566, and histidine 594 together coordinate ATP.

The protein belongs to the polyphosphate kinase 1 (PPK1) family. The cofactor is Mg(2+). Post-translationally, an intermediate of this reaction is the autophosphorylated ppk in which a phosphate is covalently linked to a histidine residue through a N-P bond.

The catalysed reaction is [phosphate](n) + ATP = [phosphate](n+1) + ADP. Functionally, catalyzes the reversible transfer of the terminal phosphate of ATP to form a long-chain polyphosphate (polyP). The sequence is that of Polyphosphate kinase 1 from Chlorobaculum tepidum (strain ATCC 49652 / DSM 12025 / NBRC 103806 / TLS) (Chlorobium tepidum).